Consider the following 1049-residue polypeptide: Protein argonaute 12 (1049 aa).

Residues methionine 1–glycine 53 are compositionally biased toward gly residues. Disordered regions lie at residues methionine 1–valine 101 and glycine 144–threonine 192. A compositionally biased stretch (basic and acidic residues) spans alanine 54–arginine 65. The segment covering glycine 66–alanine 76 has biased composition (gly residues). The span at glycine 144–glycine 160 shows a compositional bias: low complexity. Residues proline 404–glutamate 515 enclose the PAZ domain. One can recognise a Piwi domain in the interval leucine 694–glutamate 1012.

Belongs to the argonaute family. Ago subfamily.

Probably involved in the RNA silencing pathway. May bind to short RNAs such as microRNAs (miRNAs) or short interfering RNAs (siRNAs), and represses the translation of mRNAs which are complementary to them. The polypeptide is Protein argonaute 12 (AGO12) (Oryza sativa subsp. japonica (Rice)).